The sequence spans 692 residues: PTS system glucoside-specific EIICBA component (692 aa).

The 425-residue stretch at 6 to 430 (KKFFGQLQRI…LNLKTPGRED (425 aa)) folds into the PTS EIIC type-1 domain. The next 10 membrane-spanning stretches (helical) occupy residues 15-35 (IGKA…LLTF), 84-104 (LGLA…YLIM), 140-160 (LVLG…IGAL), 185-205 (FVPI…SFVW), 215-235 (LSNF…GIIE), 287-307 (AFTT…AFAI), 318-338 (VVGG…ITEP), 344-364 (LFVA…SFLI), 370-390 (VQIG…GLLS), and 398-418 (LVIP…TFLI). Residues 441–522 (SELPFEVLEA…QQIMDGKITS (82 aa)) form the PTS EIIB type-1 domain. The Phosphocysteine intermediate; for EIIB activity role is filled by cysteine 463. The 105-residue stretch at 563 to 667 (DKVFSAKMMG…DTITPIIITN (105 aa)) folds into the PTS EIIA type-1 domain. Histidine 615 acts as the Tele-phosphohistidine intermediate; for EIIA activity in catalysis.

It is found in the cell membrane. Inhibited by methyl alpha-D-glucoside, methyl beta-D-glucoside, p-nitrophenyl alpha-D-glucoside, o-nitrophenyl beta-D-glucoside and salicin, but not by 2-deoxyglucose. In terms of biological role, the phosphoenolpyruvate-dependent sugar phosphotransferase system (sugar PTS), a major carbohydrate active -transport system, catalyzes the phosphorylation of incoming sugar substrates concomitantly with their translocation across the cell membrane. This system is involved in alpha- and beta-glucoside transport. Can also transport glucose, but not galactose, fructose, mannose, cellobiose, sucrose, maltose, lactose, melibiose and trehalose, as well as N-acetylglucosamine. The protein is PTS system glucoside-specific EIICBA component (glcB) of Staphylococcus carnosus (strain TM300).